Consider the following 313-residue polypeptide: Ribosomal RNA small subunit methyltransferase H (313 aa).

Residues 35–37 (GGH), D55, F79, D101, and Q108 contribute to the S-adenosyl-L-methionine site.

Belongs to the methyltransferase superfamily. RsmH family.

Its subcellular location is the cytoplasm. The catalysed reaction is cytidine(1402) in 16S rRNA + S-adenosyl-L-methionine = N(4)-methylcytidine(1402) in 16S rRNA + S-adenosyl-L-homocysteine + H(+). In terms of biological role, specifically methylates the N4 position of cytidine in position 1402 (C1402) of 16S rRNA. The polypeptide is Ribosomal RNA small subunit methyltransferase H (Erwinia tasmaniensis (strain DSM 17950 / CFBP 7177 / CIP 109463 / NCPPB 4357 / Et1/99)).